A 492-amino-acid chain; its full sequence is 2,3-bisphosphoglycerate-independent phosphoglycerate mutase (492 aa).

Asp11 and Ser61 together coordinate Mn(2+). Ser61 acts as the Phosphoserine intermediate in catalysis. Substrate-binding positions include His118, 147-148, Arg178, Arg184, 248-251, and Lys320; these read RD and RNDR. Residues Asp386, His390, Asp427, His428, and His445 each contribute to the Mn(2+) site.

This sequence belongs to the BPG-independent phosphoglycerate mutase family. As to quaternary structure, monomer. Mn(2+) serves as cofactor.

It catalyses the reaction (2R)-2-phosphoglycerate = (2R)-3-phosphoglycerate. The protein operates within carbohydrate degradation; glycolysis; pyruvate from D-glyceraldehyde 3-phosphate: step 3/5. Catalyzes the interconversion of 2-phosphoglycerate and 3-phosphoglycerate. This is 2,3-bisphosphoglycerate-independent phosphoglycerate mutase from Campylobacter jejuni subsp. jejuni serotype O:2 (strain ATCC 700819 / NCTC 11168).